Consider the following 131-residue polypeptide: Small ribosomal subunit protein eS17A (131 aa).

This sequence belongs to the eukaryotic ribosomal protein eS17 family. As to quaternary structure, component of the small ribosomal subunit (SSU). Mature yeast ribosomes consist of a small (40S) and a large (60S) subunit. The 40S small subunit contains 1 molecule of ribosomal RNA (18S rRNA) and at least 33 different proteins. The large 60S subunit contains 3 rRNA molecules (25S, 5.8S and 5S rRNA) and at least 46 different proteins.

It localises to the cytoplasm. Functionally, component of the ribosome, a large ribonucleoprotein complex responsible for the synthesis of proteins in the cell. The small ribosomal subunit (SSU) binds messenger RNAs (mRNAs) and translates the encoded message by selecting cognate aminoacyl-transfer RNA (tRNA) molecules. The large subunit (LSU) contains the ribosomal catalytic site termed the peptidyl transferase center (PTC), which catalyzes the formation of peptide bonds, thereby polymerizing the amino acids delivered by tRNAs into a polypeptide chain. The nascent polypeptides leave the ribosome through a tunnel in the LSU and interact with protein factors that function in enzymatic processing, targeting, and the membrane insertion of nascent chains at the exit of the ribosomal tunnel. The polypeptide is Small ribosomal subunit protein eS17A (rps1701) (Schizosaccharomyces pombe (strain 972 / ATCC 24843) (Fission yeast)).